The chain runs to 250 residues: 3-deoxy-manno-octulosonate cytidylyltransferase (250 aa).

The protein belongs to the KdsB family.

The protein localises to the cytoplasm. The catalysed reaction is 3-deoxy-alpha-D-manno-oct-2-ulosonate + CTP = CMP-3-deoxy-beta-D-manno-octulosonate + diphosphate. Its pathway is nucleotide-sugar biosynthesis; CMP-3-deoxy-D-manno-octulosonate biosynthesis; CMP-3-deoxy-D-manno-octulosonate from 3-deoxy-D-manno-octulosonate and CTP: step 1/1. It participates in bacterial outer membrane biogenesis; lipopolysaccharide biosynthesis. In terms of biological role, activates KDO (a required 8-carbon sugar) for incorporation into bacterial lipopolysaccharide in Gram-negative bacteria. The chain is 3-deoxy-manno-octulosonate cytidylyltransferase from Yersinia pseudotuberculosis serotype O:1b (strain IP 31758).